Consider the following 215-residue polypeptide: MASQQERASYHAGETKARAEEKTGRMMGTAQEKAREAKDTASDAAGRAMGRGHGAKEATKEKAYETKDATKEKAYEAKDAASDATGRAMDKGRGAAGATRDKAYDAKDRAADTAQSAADRARDGAGQTGSYIGQTAEAAKQKAAGAAQYAKETAIAGKDKTGAVLQQAGEQVKSVAVGAKDAVMYTLGMSGDNKNNAAAGKDTSTYKPGTGSDYQ.

Disordered stretches follow at residues M1–G129 and S190–Q215. 4 stretches are compositionally biased toward basic and acidic residues: residues G13–G24, E32–A41, G54–A81, and A88–A111. Over residues D192 to Q215 the composition is skewed to polar residues.

Belongs to the LEA type 4 family. As to expression, expressed in the shoot apex and leaves. Expressed in dry seeds. Expressed in roots and leaves.

It localises to the nucleus. The protein is Late embryogenesis abundant protein 14 of Oryza sativa subsp. japonica (Rice).